The primary structure comprises 205 residues: Imidazoleglycerol-phosphate dehydratase (205 aa).

Belongs to the imidazoleglycerol-phosphate dehydratase family.

The catalysed reaction is D-erythro-1-(imidazol-4-yl)glycerol 3-phosphate = 3-(imidazol-4-yl)-2-oxopropyl phosphate + H2O. It participates in amino-acid biosynthesis; L-histidine biosynthesis; L-histidine from 5-phospho-alpha-D-ribose 1-diphosphate: step 6/9. The sequence is that of Imidazoleglycerol-phosphate dehydratase (HIS3) from Phaffia rhodozyma (Yeast).